Consider the following 46-residue polypeptide: Cuticle protein 4.9 (46 aa).

Functionally, component of the cuticle of migratory locust which contains more than 100 different structural proteins. The protein is Cuticle protein 4.9 of Locusta migratoria (Migratory locust).